A 691-amino-acid chain; its full sequence is Lectin-domain containing receptor kinase VI.4 (691 aa).

Positions methionine 1–alanine 19 are cleaved as a signal peptide. Residues histidine 20–valine 306 lie on the Extracellular side of the membrane. A legume-lectin like region spans residues threonine 26–alanine 273. A helical membrane pass occupies residues isoleucine 307–phenylalanine 327. The Cytoplasmic segment spans residues methionine 328–arginine 691. Positions phenylalanine 363–isoleucine 641 constitute a Protein kinase domain. ATP is bound by residues valine 369–valine 377 and lysine 392. The active-site Proton acceptor is aspartate 491.

This sequence in the C-terminal section; belongs to the protein kinase superfamily. Ser/Thr protein kinase family. It in the N-terminal section; belongs to the leguminous lectin family.

The protein localises to the cell membrane. It catalyses the reaction L-seryl-[protein] + ATP = O-phospho-L-seryl-[protein] + ADP + H(+). It carries out the reaction L-threonyl-[protein] + ATP = O-phospho-L-threonyl-[protein] + ADP + H(+). Its function is as follows. Involved in negative regulation of abscisic acid response in seed germination. The polypeptide is Lectin-domain containing receptor kinase VI.4 (LECRK64) (Arabidopsis thaliana (Mouse-ear cress)).